The following is a 160-amino-acid chain: Fluoride-specific ion channel FluC (160 aa).

Transmembrane regions (helical) follow at residues 5–25 (LFIS…GLLF), 34–54 (FGTL…LGLF), 67–87 (FLIT…SEVV), and 99–119 (FCVL…GIWI). Na(+)-binding residues include glycine 74 and threonine 77.

This sequence belongs to the fluoride channel Fluc/FEX (TC 1.A.43) family.

It localises to the cell inner membrane. It carries out the reaction fluoride(in) = fluoride(out). With respect to regulation, na(+) is not transported, but it plays an essential structural role and its presence is essential for fluoride channel function. In terms of biological role, fluoride-specific ion channel. Important for reducing fluoride concentration in the cell, thus reducing its toxicity. This Haemophilus influenzae (strain ATCC 51907 / DSM 11121 / KW20 / Rd) protein is Fluoride-specific ion channel FluC.